The chain runs to 403 residues: Cytoplasmic tRNA 2-thiolation protein 2 (403 aa).

This sequence belongs to the CTU2/NCS2 family.

The protein localises to the cytoplasm. The protein operates within tRNA modification; 5-methoxycarbonylmethyl-2-thiouridine-tRNA biosynthesis. Its function is as follows. Plays a central role in 2-thiolation of mcm(5)S(2)U at tRNA wobble positions of tRNA(Lys), tRNA(Glu) and tRNA(Gln). May act by forming a heterodimer with NCS6/CTU1 that ligates sulfur from thiocarboxylated URM1 onto the uridine of tRNAs at wobble position. The protein is Cytoplasmic tRNA 2-thiolation protein 2 of Drosophila ananassae (Fruit fly).